A 355-amino-acid chain; its full sequence is MSKIKARKGAPYARILGVGGYRPVRVVPNDVILEKIDSSDEWIRSRSGIETRHWASDEETVAAMSIEASGKAIADAGITASQIGAVVVSTVSHFSQTPAIATEIADKLGTNKAAAFDISAGCAGFGYGLTLAKGMVVEGSAEYVLVIGVERLSDLTDLEDRATAFLFGDGAGAVVVGPSEEPHIGPTVWGSEGDKAGTIKQTVPWDRYLPHSRLRSSGGTPTGDVSPLPLDSEGNVKFPAITQEGQAVFRWAVFEMAKVAQQALDAAGITSDDLDVFIPHQANERIIDSMVKTLKLPEHVTVARDVRTTGNTSAASIPLAMERLLATGEAKSGDTALVIGFGAGLVYAATVVTLP.

Active-site residues include cysteine 122 and histidine 280. Residues 281-285 (QANER) are ACP-binding. Residue asparagine 311 is part of the active site.

This sequence belongs to the thiolase-like superfamily. FabH family. Homodimer.

It localises to the cytoplasm. It catalyses the reaction malonyl-[ACP] + acetyl-CoA + H(+) = 3-oxobutanoyl-[ACP] + CO2 + CoA. It functions in the pathway lipid metabolism; fatty acid biosynthesis. Its function is as follows. Catalyzes the condensation reaction of fatty acid synthesis by the addition to an acyl acceptor of two carbons from malonyl-ACP. Catalyzes the first condensation reaction which initiates fatty acid synthesis and may therefore play a role in governing the total rate of fatty acid production. Possesses both acetoacetyl-ACP synthase and acetyl transacylase activities. Its substrate specificity determines the biosynthesis of branched-chain and/or straight-chain of fatty acids. This Streptomyces avermitilis (strain ATCC 31267 / DSM 46492 / JCM 5070 / NBRC 14893 / NCIMB 12804 / NRRL 8165 / MA-4680) protein is Beta-ketoacyl-[acyl-carrier-protein] synthase III 1.